The chain runs to 255 residues: Thiazole synthase (255 aa).

Catalysis depends on lysine 96, which acts as the Schiff-base intermediate with DXP. 1-deoxy-D-xylulose 5-phosphate is bound by residues glycine 157, 183–184 (AG), and 205–206 (NT).

Belongs to the ThiG family. Homotetramer. Forms heterodimers with either ThiH or ThiS.

Its subcellular location is the cytoplasm. It carries out the reaction [ThiS sulfur-carrier protein]-C-terminal-Gly-aminoethanethioate + 2-iminoacetate + 1-deoxy-D-xylulose 5-phosphate = [ThiS sulfur-carrier protein]-C-terminal Gly-Gly + 2-[(2R,5Z)-2-carboxy-4-methylthiazol-5(2H)-ylidene]ethyl phosphate + 2 H2O + H(+). It participates in cofactor biosynthesis; thiamine diphosphate biosynthesis. Functionally, catalyzes the rearrangement of 1-deoxy-D-xylulose 5-phosphate (DXP) to produce the thiazole phosphate moiety of thiamine. Sulfur is provided by the thiocarboxylate moiety of the carrier protein ThiS. In vitro, sulfur can be provided by H(2)S. This Geobacillus thermodenitrificans (strain NG80-2) protein is Thiazole synthase.